Here is a 709-residue protein sequence, read N- to C-terminus: ATP-dependent zinc metalloprotease FtsH (709 aa).

Residues 1–25 (MKKNKGLNEATTSEKPQFPKRTAWK) lie on the Cytoplasmic side of the membrane. Residues 26–46 (IFWWVVILAIIIGILVYILMP) form a helical membrane-spanning segment. Residues 47–171 (RATTAVIEKW…FVAPDTRARD (125 aa)) are Extracellular-facing. A helical membrane pass occupies residues 172 to 192 (VLNIFFGLLPIIIFVIFFLLF). Residues 193 to 709 (WRSARGISGG…DTEKDSETNS (517 aa)) are Cytoplasmic-facing. 268 to 275 (GPPGTGKT) serves as a coordination point for ATP. Histidine 490 contacts Zn(2+). The active site involves glutamate 491. Positions 494 and 569 each coordinate Zn(2+). The segment at 673 to 709 (ILAQKQEQQAKQKAEAKEAKLNKKTEKDTEKDSETNS) is disordered. Residues 680-709 (QQAKQKAEAKEAKLNKKTEKDTEKDSETNS) show a composition bias toward basic and acidic residues.

It in the central section; belongs to the AAA ATPase family. The protein in the C-terminal section; belongs to the peptidase M41 family. As to quaternary structure, homohexamer. Requires Zn(2+) as cofactor.

It is found in the cell membrane. Its function is as follows. Acts as a processive, ATP-dependent zinc metallopeptidase for both cytoplasmic and membrane proteins. Plays a role in the quality control of integral membrane proteins. The polypeptide is ATP-dependent zinc metalloprotease FtsH (Mycoplasma pneumoniae (strain ATCC 29342 / M129 / Subtype 1) (Mycoplasmoides pneumoniae)).